The chain runs to 463 residues: Endoglucanase (463 aa).

The signal sequence occupies residues 1-27; it reads MVEKRKIFTVLCACGIGFTSYTSCISA. Positions 28-55 are excised as a propeptide; sequence AAIDNDTLINNGHKINSSIITNSSQVSA. Catalysis depends on glutamate 130, which acts as the Proton donor. Aspartate 191 (nucleophile) is an active-site residue.

The protein belongs to the glycosyl hydrolase 8 (cellulase D) family. The N- and the C-terminus may be subjected to proteolysis.

It catalyses the reaction Endohydrolysis of (1-&gt;4)-beta-D-glucosidic linkages in cellulose, lichenin and cereal beta-D-glucans.. In Bacillus sp. (strain KSM-330), this protein is Endoglucanase.